The chain runs to 93 residues: Alpha-defensin 5 (93 aa).

Positions 1–19 (MKTFVLLSALVLLAFQVQA) are cleaved as a signal peptide. The propeptide occupies 20–58 (DPIHKTDEETNTEEQPGEEDQAVSISFGGQEGSALHEEL). Intrachain disulfides connect Cys64–Cys92, Cys66–Cys81, and Cys71–Cys91.

It belongs to the alpha-defensin family.

It is found in the secreted. Its function is as follows. Probably contributes to the antimicrobial barrier function of the small bowel mucosa. This is Alpha-defensin 5 (Defa5) from Mus musculus (Mouse).